A 154-amino-acid chain; its full sequence is Transcriptional regulator MraZ (154 aa).

SpoVT-AbrB domains lie at 6 to 53 and 83 to 126; these read NSEA…PENV and VEVI…SKEI.

The protein belongs to the MraZ family. Forms oligomers.

The protein resides in the cytoplasm. It localises to the nucleoid. This is Transcriptional regulator MraZ from Phocaeicola vulgatus (strain ATCC 8482 / DSM 1447 / JCM 5826 / CCUG 4940 / NBRC 14291 / NCTC 11154) (Bacteroides vulgatus).